The sequence spans 358 residues: Probable branched-chain-amino-acid aminotransferase (358 aa).

Residue lysine 196 is modified to N6-(pyridoxal phosphate)lysine.

The protein belongs to the class-IV pyridoxal-phosphate-dependent aminotransferase family. It depends on pyridoxal 5'-phosphate as a cofactor.

The enzyme catalyses L-leucine + 2-oxoglutarate = 4-methyl-2-oxopentanoate + L-glutamate. It catalyses the reaction L-isoleucine + 2-oxoglutarate = (S)-3-methyl-2-oxopentanoate + L-glutamate. The catalysed reaction is L-valine + 2-oxoglutarate = 3-methyl-2-oxobutanoate + L-glutamate. It participates in amino-acid biosynthesis; L-isoleucine biosynthesis; L-isoleucine from 2-oxobutanoate: step 4/4. Its pathway is amino-acid biosynthesis; L-leucine biosynthesis; L-leucine from 3-methyl-2-oxobutanoate: step 4/4. It functions in the pathway amino-acid biosynthesis; L-valine biosynthesis; L-valine from pyruvate: step 4/4. Acts on leucine, isoleucine and valine. This Staphylococcus aureus (strain N315) protein is Probable branched-chain-amino-acid aminotransferase (ilvE).